A 703-amino-acid polypeptide reads, in one-letter code: Calcium-responsive transcription factor (703 aa).

Disordered regions lie at residues 1–61 (MEQS…QNIP), 130–150 (GPLVDENSPQDVSEEKPSDRN), and 517–539 (GNSQGESVSSKLETNQTRNSLSP). Residues 9-22 (KVNHNDSEESKTDS) are compositionally biased toward basic and acidic residues. Positions 23-34 (QHLTYMDSSEPS) are enriched in polar residues.

The protein resides in the nucleus. Functionally, acts as a transcriptional activator that mediates the calcium- and neuron-selective induction of BDNF exon III transcription. Binds to the consensus calcium-response element CaRE1 5'-CTATTTCGAG-3' sequence. In Bos taurus (Bovine), this protein is Calcium-responsive transcription factor (CARF).